The sequence spans 147 residues: MCAVLDRSMLSVAEISDRLEIQQLLVDYSSAIDQRRFDDLDRVFTPDAYIDYRALGGIDGRYPKIKQWLSQVLGNFPVYAHMLGNFSVRVDGDTASSRVICFNPMVFAGDRQQVLFCGLWYDDDFVRTPDGWRIIRRVETKCFQKMM.

This is an uncharacterized protein from Mycobacterium tuberculosis (strain CDC 1551 / Oshkosh).